A 201-amino-acid chain; its full sequence is Holliday junction branch migration complex subunit RuvA (201 aa).

The tract at residues 1-64 (MIGRLYGKII…EDAHLLFGFA (64 aa)) is domain I. A domain II region spans residues 65-143 (QKQDRTLFRE…GIAQTDFFVE (79 aa)). Residues 144–154 (HSHETMVATYE) form a flexible linker region. Positions 154–201 (EIDASEEARDALLALGYKLTDAEKMIKKVHKSGATSEQLIRDALKASL) are domain III.

The protein belongs to the RuvA family. Homotetramer. Forms an RuvA(8)-RuvB(12)-Holliday junction (HJ) complex. HJ DNA is sandwiched between 2 RuvA tetramers; dsDNA enters through RuvA and exits via RuvB. An RuvB hexamer assembles on each DNA strand where it exits the tetramer. Each RuvB hexamer is contacted by two RuvA subunits (via domain III) on 2 adjacent RuvB subunits; this complex drives branch migration. In the full resolvosome a probable DNA-RuvA(4)-RuvB(12)-RuvC(2) complex forms which resolves the HJ.

Its subcellular location is the cytoplasm. In terms of biological role, the RuvA-RuvB-RuvC complex processes Holliday junction (HJ) DNA during genetic recombination and DNA repair, while the RuvA-RuvB complex plays an important role in the rescue of blocked DNA replication forks via replication fork reversal (RFR). RuvA specifically binds to HJ cruciform DNA, conferring on it an open structure. The RuvB hexamer acts as an ATP-dependent pump, pulling dsDNA into and through the RuvAB complex. HJ branch migration allows RuvC to scan DNA until it finds its consensus sequence, where it cleaves and resolves the cruciform DNA. The polypeptide is Holliday junction branch migration complex subunit RuvA (Haemophilus ducreyi (strain 35000HP / ATCC 700724)).